A 264-amino-acid polypeptide reads, in one-letter code: Thymidylate synthase (264 aa).

R21 contacts dUMP. H51 lines the (6R)-5,10-methylene-5,6,7,8-tetrahydrofolate pocket. 126 to 127 (RR) lines the dUMP pocket. Residue C146 is the Nucleophile of the active site. DUMP contacts are provided by residues 166–169 (RSAD), N177, and 207–209 (HLY). D169 is a (6R)-5,10-methylene-5,6,7,8-tetrahydrofolate binding site. A263 serves as a coordination point for (6R)-5,10-methylene-5,6,7,8-tetrahydrofolate.

The protein belongs to the thymidylate synthase family. Bacterial-type ThyA subfamily. As to quaternary structure, homodimer.

The protein localises to the cytoplasm. It catalyses the reaction dUMP + (6R)-5,10-methylene-5,6,7,8-tetrahydrofolate = 7,8-dihydrofolate + dTMP. The protein operates within pyrimidine metabolism; dTTP biosynthesis. In terms of biological role, catalyzes the reductive methylation of 2'-deoxyuridine-5'-monophosphate (dUMP) to 2'-deoxythymidine-5'-monophosphate (dTMP) while utilizing 5,10-methylenetetrahydrofolate (mTHF) as the methyl donor and reductant in the reaction, yielding dihydrofolate (DHF) as a by-product. This enzymatic reaction provides an intracellular de novo source of dTMP, an essential precursor for DNA biosynthesis. The protein is Thymidylate synthase of Methylorubrum extorquens (strain CM4 / NCIMB 13688) (Methylobacterium extorquens).